The sequence spans 350 residues: Biotin synthase (350 aa).

The 225-residue stretch at 38 to 262 (RQVQVSTLLS…MMPTSYVRLS (225 aa)) folds into the Radical SAM core domain. Cys-53, Cys-57, and Cys-60 together coordinate [4Fe-4S] cluster. [2Fe-2S] cluster is bound by residues Cys-97, Cys-128, Cys-188, and Arg-260.

The protein belongs to the radical SAM superfamily. Biotin synthase family. In terms of assembly, homodimer. [4Fe-4S] cluster is required as a cofactor. Requires [2Fe-2S] cluster as cofactor.

It carries out the reaction (4R,5S)-dethiobiotin + (sulfur carrier)-SH + 2 reduced [2Fe-2S]-[ferredoxin] + 2 S-adenosyl-L-methionine = (sulfur carrier)-H + biotin + 2 5'-deoxyadenosine + 2 L-methionine + 2 oxidized [2Fe-2S]-[ferredoxin]. Its pathway is cofactor biosynthesis; biotin biosynthesis; biotin from 7,8-diaminononanoate: step 2/2. In terms of biological role, catalyzes the conversion of dethiobiotin (DTB) to biotin by the insertion of a sulfur atom into dethiobiotin via a radical-based mechanism. This Yersinia enterocolitica serotype O:8 / biotype 1B (strain NCTC 13174 / 8081) protein is Biotin synthase.